Reading from the N-terminus, the 402-residue chain is GPI mannosyltransferase 1 (402 aa).

The next 10 helical transmembrane spans lie at Val-5–Phe-25, Trp-79–Ile-99, Leu-108–Ser-128, Leu-162–Leu-182, Ile-191–Phe-211, Phe-238–Ile-258, Leu-260–Trp-280, Gln-309–Trp-329, Val-333–Leu-353, and Leu-365–Thr-385.

It belongs to the PIGM family.

The protein resides in the endoplasmic reticulum membrane. The protein operates within glycolipid biosynthesis; glycosylphosphatidylinositol-anchor biosynthesis. Its function is as follows. Mannosyltransferase involved in glycosylphosphatidylinositol-anchor biosynthesis. Transfers the first alpha-1,4-mannose to GlcN-acyl-PI during GPI precursor assembly. Required for cell wall integrity. The chain is GPI mannosyltransferase 1 (GPI14) from Kluyveromyces lactis (strain ATCC 8585 / CBS 2359 / DSM 70799 / NBRC 1267 / NRRL Y-1140 / WM37) (Yeast).